The following is a 404-amino-acid chain: Multidrug resistance protein MdtG (404 aa).

The next 11 membrane-spanning stretches (helical) occupy residues 19–39 (LGCF…PLYV), 56–76 (LVFS…GGLA), 90–110 (LGMA…QFLI), 113–133 (ALLG…ATQV), 144–164 (TLST…GLLA), 171–191 (PVFF…FFFI), 222–242 (LFVT…ILTL), 254–274 (IAFI…LSAP), 288–308 (ILIV…FVQT), 317–337 (FLLG…LVYN), and 376–396 (AVFC…WNSL).

It belongs to the major facilitator superfamily. DHA1 family. MdtG (TC 2.A.1.2.20) subfamily.

The protein resides in the cell inner membrane. The polypeptide is Multidrug resistance protein MdtG (Salmonella heidelberg (strain SL476)).